The sequence spans 151 residues: Apolipoprotein A-I (151 aa).

The signal sequence occupies residues 1–18; the sequence is MKAVVLTLAVLFLTGSQA. Positions 19–24 are excised as a propeptide; the sequence is RHFWQQ. A run of 2 repeats spans residues 67–88 and 89–110. The segment at 67–143 is 4 X approximate tandem repeats; that stretch reads LKLLDNWDTL…EVELYRQKVA (77 aa). At methionine 109 the chain carries Methionine sulfoxide. One copy of the 3; half-length repeat lies at 111 to 121; the sequence is KDLEEVKQKVQ. Residues 122 to 143 form repeat 4; that stretch reads PYLDDFQKKWQEEVELYRQKVA.

The protein belongs to the apolipoprotein A1/A4/E family. Homodimer. Interacts with APOA1BP and CLU. Component of a sperm activating protein complex (SPAP), consisting of APOA1, an immunoglobulin heavy chain, an immunoglobulin light chain and albumin. Interacts with NDRG1. Interacts with SCGB3A2. Interacts with NAXE and YJEFN3. Glycosylated. In terms of processing, palmitoylated. Post-translationally, phosphorylation sites are present in the extracellular medium. In terms of tissue distribution, major protein of plasma HDL, also found in chylomicrons.

The protein localises to the secreted. Its function is as follows. Participates in the reverse transport of cholesterol from tissues to the liver for excretion by promoting cholesterol efflux from tissues and by acting as a cofactor for the lecithin cholesterol acyltransferase (LCAT). As part of the SPAP complex, activates spermatozoa motility. This is Apolipoprotein A-I (APOA1) from Panthera tigris altaica (Siberian tiger).